The sequence spans 541 residues: Chaperonin GroEL (541 aa).

ATP contacts are provided by residues 29-32, 86-90, G413, 477-479, and D493; these read TLGP, DGTTT, and DAL.

This sequence belongs to the chaperonin (HSP60) family. As to quaternary structure, forms a cylinder of 14 subunits composed of two heptameric rings stacked back-to-back. Interacts with the co-chaperonin GroES.

The protein localises to the cytoplasm. The catalysed reaction is ATP + H2O + a folded polypeptide = ADP + phosphate + an unfolded polypeptide.. In terms of biological role, together with its co-chaperonin GroES, plays an essential role in assisting protein folding. The GroEL-GroES system forms a nano-cage that allows encapsulation of the non-native substrate proteins and provides a physical environment optimized to promote and accelerate protein folding. This is Chaperonin GroEL from Clostridium botulinum (strain Loch Maree / Type A3).